The sequence spans 233 residues: Ribonuclease 3 (233 aa).

The 123-residue stretch at 4–126 (LNKLMERLGH…IVGSIYIDAG (123 aa)) folds into the RNase III domain. Residue E39 coordinates Mg(2+). D43 is an active-site residue. Residues D112 and E115 each coordinate Mg(2+). E115 is a catalytic residue. A DRBM domain is found at 153 to 222 (DAKSLLQEWL…AKRFLELLDD (70 aa)).

Belongs to the ribonuclease III family. In terms of assembly, homodimer. Mg(2+) is required as a cofactor.

The protein localises to the cytoplasm. It catalyses the reaction Endonucleolytic cleavage to 5'-phosphomonoester.. Functionally, digests double-stranded RNA. Involved in the processing of primary rRNA transcript to yield the immediate precursors to the large and small rRNAs (23S and 16S). Processes some mRNAs, and tRNAs when they are encoded in the rRNA operon. Processes pre-crRNA and tracrRNA of type II CRISPR loci if present in the organism. The chain is Ribonuclease 3 from Coxiella burnetii (strain CbuG_Q212) (Coxiella burnetii (strain Q212)).